We begin with the raw amino-acid sequence, 488 residues long: MEADEVSIREQNFHSQVREYTICFLLFAVLYIVSYFIITRYKRKADEQEDEDAIVNRISLFLSTFTLAVSAGAVLLLPFSIISNEILLSFPQNYYIQWLNGSLIHGLWNLASLFSNLCLFVLMPFAFFFLESEGFAGLKKGIRARILETLVMLILLALLILGIVWVASALIDNDAASMESLYDLWEFYLPYLYSCISLMGCLLLLLCTPVGLSRMFTVMGQLLVKPTILEDLDEQMYIITLEEEAIQRKLNGISSTLENQTVELERELEKVKCKKTNLERRKKASAWERNLVYPAVMILLLIETSISVLLVAFNILYLLVDETAMPKGSGGPGIGNASLSTFGFVGAALEIILIFYLMVSSVVGFYSLRFFENFIPRKDDTTMTKIIGNCVSILVLSSALPVMSRTLGITRFDLLGDFGRFNWLGNFYIVLSYNLLFAIMTTLCLVRKFTSAVREELLKALGLDKLHLSNNPRDSETKPSANGHQKTL.

Residues 1–18 lie on the Extracellular side of the membrane; that stretch reads MEADEVSIREQNFHSQVR. The helical transmembrane segment at 19 to 39 threads the bilayer; it reads EYTICFLLFAVLYIVSYFIIT. Over 40–61 the chain is Cytoplasmic; sequence RYKRKADEQEDEDAIVNRISLF. The helical transmembrane segment at 62–82 threads the bilayer; that stretch reads LSTFTLAVSAGAVLLLPFSII. Residues 83–109 are Extracellular-facing; sequence SNEILLSFPQNYYIQWLNGSLIHGLWN. Residues 110–130 form a helical membrane-spanning segment; the sequence is LASLFSNLCLFVLMPFAFFFL. Topologically, residues 131–150 are cytoplasmic; it reads ESEGFAGLKKGIRARILETL. A helical membrane pass occupies residues 151–171; the sequence is VMLILLALLILGIVWVASALI. The Extracellular portion of the chain corresponds to 172 to 186; the sequence is DNDAASMESLYDLWE. The helical transmembrane segment at 187 to 207 threads the bilayer; it reads FYLPYLYSCISLMGCLLLLLC. The Cytoplasmic portion of the chain corresponds to 208 to 295; the sequence is TPVGLSRMFT…AWERNLVYPA (88 aa). Positions 246-286 form a coiled coil; sequence IQRKLNGISSTLENQTVELERELEKVKCKKTNLERRKKASA. Residues 296–316 traverse the membrane as a helical segment; that stretch reads VMILLLIETSISVLLVAFNIL. Topologically, residues 317 to 338 are extracellular; that stretch reads YLLVDETAMPKGSGGPGIGNAS. Residues 339-359 form a helical membrane-spanning segment; it reads LSTFGFVGAALEIILIFYLMV. The Cytoplasmic portion of the chain corresponds to 360-382; it reads SSVVGFYSLRFFENFIPRKDDTT. A helical transmembrane segment spans residues 383-403; the sequence is MTKIIGNCVSILVLSSALPVM. At 404–425 the chain is on the extracellular side; sequence SRTLGITRFDLLGDFGRFNWLG. Residues 426-446 form a helical membrane-spanning segment; that stretch reads NFYIVLSYNLLFAIMTTLCLV. The Cytoplasmic portion of the chain corresponds to 447 to 488; it reads RKFTSAVREELLKALGLDKLHLSNNPRDSETKPSANGHQKTL.

It belongs to the LIMR family. Detected ubiquitously at low levels throughout the developing embryo. Present initially in the limb mesoderm as the limb bud emerges from the body wall and up-regulated along the posterior margin of the developing limb bud with progression of the limb outgrowth. Higher levels are detected in limb buds, otic vesicles and pharyngeal arches. Isoform 1 is detected in lung, spleen, heart, breast muscle, cartilage and liver of the adult tissues. Isoform 3 is detected in adult lung, spleen, heart and breast muscle but not detected in cartilage and liver.

Its subcellular location is the membrane. In terms of biological role, putative membrane receptor. The sequence is that of Limb region 1 protein homolog (LMBR1) from Gallus gallus (Chicken).